The chain runs to 386 residues: Manganese dependent endoglucanase Eg5A (386 aa).

A signal peptide spans 1–17 (MLKYASIALALATLGVA). The 36-residue stretch at 18-53 (QQQQWGQCGGIGWTGATTCVAGSVCSVLNPYYSQCI) folds into the CBM1 domain. E209 acts as the Proton donor in catalysis. E319 acts as the Nucleophile in catalysis. N324 carries an N-linked (GlcNAc...) asparagine glycan.

It belongs to the glycosyl hydrolase 5 (cellulase A) family. It depends on Mn(2+) as a cofactor.

The protein resides in the secreted. It carries out the reaction Endohydrolysis of (1-&gt;4)-beta-D-glucosidic linkages in cellulose, lichenin and cereal beta-D-glucans.. In terms of biological role, secreted manganese dependent endoglucanase that acts by cleaving the beta-1,4-glucose linkage. Exhibits high activity toward carboxymethyl-cellulose (CMC), barley glucan, and glucomannan. Displays low activity on larminarin and xyloglucan but does not hydrolyze hemicellulose substrates such as birchwood xylan, arabinoxylan, and arabinan. The polypeptide is Manganese dependent endoglucanase Eg5A (Phanerodontia chrysosporium (White-rot fungus)).